Consider the following 486-residue polypeptide: Cysteine--tRNA ligase (486 aa).

Cys29 contacts Zn(2+). A 'HIGH' region motif is present at residues 31–41 (VTVYDYCHLGH). Zn(2+)-binding residues include Cys214, His239, and Glu243. The 'KMSKS' region motif lies at 271 to 275 (KMSKS). Residue Lys274 participates in ATP binding.

It belongs to the class-I aminoacyl-tRNA synthetase family. Monomer. The cofactor is Zn(2+).

The protein localises to the cytoplasm. It carries out the reaction tRNA(Cys) + L-cysteine + ATP = L-cysteinyl-tRNA(Cys) + AMP + diphosphate. This chain is Cysteine--tRNA ligase, found in Trichormus variabilis (strain ATCC 29413 / PCC 7937) (Anabaena variabilis).